The following is a 177-amino-acid chain: Large ribosomal subunit protein uL10 (177 aa).

Belongs to the universal ribosomal protein uL10 family. In terms of assembly, part of the ribosomal stalk of the 50S ribosomal subunit. The N-terminus interacts with L11 and the large rRNA to form the base of the stalk. The C-terminus forms an elongated spine to which L12 dimers bind in a sequential fashion forming a multimeric L10(L12)X complex.

Its function is as follows. Forms part of the ribosomal stalk, playing a central role in the interaction of the ribosome with GTP-bound translation factors. The protein is Large ribosomal subunit protein uL10 of Leptospira borgpetersenii serovar Hardjo-bovis (strain JB197).